We begin with the raw amino-acid sequence, 517 residues long: Crotonobetaine/carnitine--CoA ligase (517 aa).

This sequence belongs to the ATP-dependent AMP-binding enzyme family.

The enzyme catalyses 4-(trimethylamino)butanoate + ATP + CoA = 4-(trimethylamino)butanoyl-CoA + AMP + diphosphate. It catalyses the reaction crotonobetaine + ATP + CoA = crotonobetainyl-CoA + AMP + diphosphate. The catalysed reaction is (R)-carnitine + ATP + CoA = (R)-carnitinyl-CoA + AMP + diphosphate. It participates in amine and polyamine metabolism; carnitine metabolism. Catalyzes the transfer of CoA to carnitine, generating the initial carnitinyl-CoA needed for the CaiB reaction cycle. Also has activity toward crotonobetaine and gamma-butyrobetaine. This Salmonella agona (strain SL483) protein is Crotonobetaine/carnitine--CoA ligase.